A 172-amino-acid chain; its full sequence is Translation initiation factor IF-3 (172 aa).

It belongs to the IF-3 family. In terms of assembly, monomer.

Its subcellular location is the cytoplasm. Its function is as follows. IF-3 binds to the 30S ribosomal subunit and shifts the equilibrium between 70S ribosomes and their 50S and 30S subunits in favor of the free subunits, thus enhancing the availability of 30S subunits on which protein synthesis initiation begins. This Sulfurimonas denitrificans (strain ATCC 33889 / DSM 1251) (Thiomicrospira denitrificans (strain ATCC 33889 / DSM 1251)) protein is Translation initiation factor IF-3.